The following is a 113-amino-acid chain: Large ribosomal subunit protein uL22 (113 aa).

It belongs to the universal ribosomal protein uL22 family. Part of the 50S ribosomal subunit.

This protein binds specifically to 23S rRNA; its binding is stimulated by other ribosomal proteins, e.g. L4, L17, and L20. It is important during the early stages of 50S assembly. It makes multiple contacts with different domains of the 23S rRNA in the assembled 50S subunit and ribosome. Its function is as follows. The globular domain of the protein is located near the polypeptide exit tunnel on the outside of the subunit, while an extended beta-hairpin is found that lines the wall of the exit tunnel in the center of the 70S ribosome. In Halalkalibacterium halodurans (strain ATCC BAA-125 / DSM 18197 / FERM 7344 / JCM 9153 / C-125) (Bacillus halodurans), this protein is Large ribosomal subunit protein uL22.